The sequence spans 87 residues: Small ribosomal subunit protein bS20 (87 aa).

The segment at 1–22 (MANIKSQIKRNKTNEKARLRNQ) is disordered.

The protein belongs to the bacterial ribosomal protein bS20 family.

Binds directly to 16S ribosomal RNA. This Corynebacterium glutamicum (strain R) protein is Small ribosomal subunit protein bS20.